We begin with the raw amino-acid sequence, 349 residues long: Isopentenyl-diphosphate delta-isomerase (349 aa).

Residue 6–7 (RK) participates in substrate binding. Residues 62–64 (AMT), serine 93, and asparagine 122 each bind FMN. Glutamine 152 lines the substrate pocket. Residue glutamate 153 participates in Mg(2+) binding. FMN is bound by residues lysine 184, threonine 214, 258 to 259 (GG), and 280 to 281 (AG).

The protein belongs to the IPP isomerase type 2 family. As to quaternary structure, homooctamer. Dimer of tetramers. FMN serves as cofactor. Requires NADPH as cofactor. It depends on Mg(2+) as a cofactor.

The protein resides in the cytoplasm. The catalysed reaction is isopentenyl diphosphate = dimethylallyl diphosphate. In terms of biological role, involved in the biosynthesis of isoprenoids. Catalyzes the 1,3-allylic rearrangement of the homoallylic substrate isopentenyl (IPP) to its allylic isomer, dimethylallyl diphosphate (DMAPP). This Bacillus cereus (strain AH187) protein is Isopentenyl-diphosphate delta-isomerase.